The following is an 846-amino-acid chain: Iron-sulfur cluster assembly SufBD family protein Mb1496 (846 aa).

Residues 1–20 (MTLTPEASKSVAQPPTQAPL) are disordered. The DOD-type homing endonuclease domain occupies 388–528 (LAGYYLAEGH…LQSILARLGH (141 aa)).

This sequence belongs to the iron-sulfur cluster assembly SufBD family. Post-translationally, this protein undergoes a protein self splicing that involves a post-translational excision of the intervening region (intein) followed by peptide ligation.

This Mycobacterium bovis (strain ATCC BAA-935 / AF2122/97) protein is Iron-sulfur cluster assembly SufBD family protein Mb1496.